The chain runs to 252 residues: Geranylgeranylglyceryl phosphate synthase (252 aa).

Residues Asp27 and Ser56 each contribute to the Mg(2+) site. Sn-glycerol 1-phosphate-binding positions include 175-181 (YLEAGSG), 206-207 (GG), and 228-229 (GT).

The protein belongs to the GGGP/HepGP synthase family. Group II subfamily. The cofactor is Mg(2+).

The protein localises to the cytoplasm. It catalyses the reaction sn-glycerol 1-phosphate + (2E,6E,10E)-geranylgeranyl diphosphate = sn-3-O-(geranylgeranyl)glycerol 1-phosphate + diphosphate. Its pathway is membrane lipid metabolism; glycerophospholipid metabolism. Its function is as follows. Prenyltransferase that catalyzes the transfer of the geranylgeranyl moiety of geranylgeranyl diphosphate (GGPP) to the C3 hydroxyl of sn-glycerol-1-phosphate (G1P). This reaction is the first ether-bond-formation step in the biosynthesis of archaeal membrane lipids. The sequence is that of Geranylgeranylglyceryl phosphate synthase from Pyrococcus abyssi (strain GE5 / Orsay).